The sequence spans 159 residues: MNIKIIGVGKLKEKYFRDGIAEYLKRMDKFAKVKIVEVADEKAPENLSEAEMADVKAKEGDRILGKIKDKEWVIALAIEGKQRPSEVFAKEIADLGTYGYSDITFVIGGSLGLSPAVMKRANDTLSFGKLTMPHQLMRLVLMEQIYRAFMINIGSPYHK.

S-adenosyl-L-methionine is bound by residues L76, G108, and 127-132 (FGKLTM).

Belongs to the RNA methyltransferase RlmH family. As to quaternary structure, homodimer.

The protein resides in the cytoplasm. The enzyme catalyses pseudouridine(1915) in 23S rRNA + S-adenosyl-L-methionine = N(3)-methylpseudouridine(1915) in 23S rRNA + S-adenosyl-L-homocysteine + H(+). Functionally, specifically methylates the pseudouridine at position 1915 (m3Psi1915) in 23S rRNA. The chain is Ribosomal RNA large subunit methyltransferase H from Lacticaseibacillus casei (strain BL23) (Lactobacillus casei).